The following is a 344-amino-acid chain: Phenylalanine--tRNA ligase alpha subunit (344 aa).

Glu255 lines the Mg(2+) pocket.

Belongs to the class-II aminoacyl-tRNA synthetase family. Phe-tRNA synthetase alpha subunit type 1 subfamily. As to quaternary structure, tetramer of two alpha and two beta subunits. It depends on Mg(2+) as a cofactor.

The protein resides in the cytoplasm. The enzyme catalyses tRNA(Phe) + L-phenylalanine + ATP = L-phenylalanyl-tRNA(Phe) + AMP + diphosphate + H(+). This is Phenylalanine--tRNA ligase alpha subunit from Phocaeicola vulgatus (strain ATCC 8482 / DSM 1447 / JCM 5826 / CCUG 4940 / NBRC 14291 / NCTC 11154) (Bacteroides vulgatus).